The chain runs to 165 residues: Transcription factor TCP16 (165 aa).

Polar residues predominate over residues 1–11; it reads MDSKNGINNSQ. Disordered stretches follow at residues 1 to 21 and 146 to 165; these read MDSK…KDRH and GNAT…TTTV. The segment covering 12–21 has biased composition (basic residues); the sequence is KARRTPKDRH. Residues 17–71 enclose the TCP domain; sequence PKDRHLKIGGRDRRIRIPPSVAPQLFRLTKELGFKTDGETVSWLLQNAEPAIFAA. Over residues 148-165 the composition is skewed to low complexity; it reads ATASDTTSAATTTATTTV.

Mostly in anther in young buds.

The protein localises to the nucleus. Functionally, required during early processes in pollen development. The polypeptide is Transcription factor TCP16 (TCP16) (Arabidopsis thaliana (Mouse-ear cress)).